Here is a 123-residue protein sequence, read N- to C-terminus: Large ribosomal subunit protein bL12 (123 aa).

The protein belongs to the bacterial ribosomal protein bL12 family. In terms of assembly, homodimer. Part of the ribosomal stalk of the 50S ribosomal subunit. Forms a multimeric L10(L12)X complex, where L10 forms an elongated spine to which 2 to 4 L12 dimers bind in a sequential fashion. Binds GTP-bound translation factors.

In terms of biological role, forms part of the ribosomal stalk which helps the ribosome interact with GTP-bound translation factors. Is thus essential for accurate translation. This Rhodopseudomonas palustris (strain HaA2) protein is Large ribosomal subunit protein bL12.